The primary structure comprises 249 residues: 5'-nucleotidase SurE (249 aa).

Positions 8, 9, 39, and 91 each coordinate a divalent metal cation.

The protein belongs to the SurE nucleotidase family. A divalent metal cation is required as a cofactor.

Its subcellular location is the cytoplasm. The catalysed reaction is a ribonucleoside 5'-phosphate + H2O = a ribonucleoside + phosphate. In terms of biological role, nucleotidase that shows phosphatase activity on nucleoside 5'-monophosphates. In Azotobacter vinelandii (strain DJ / ATCC BAA-1303), this protein is 5'-nucleotidase SurE.